A 264-amino-acid polypeptide reads, in one-letter code: Thiazole synthase (264 aa).

K106 serves as the catalytic Schiff-base intermediate with DXP. Residues G167, A193–G194, and N215–S216 each bind 1-deoxy-D-xylulose 5-phosphate.

The protein belongs to the ThiG family. Homotetramer. Forms heterodimers with either ThiH or ThiS.

The protein resides in the cytoplasm. The catalysed reaction is [ThiS sulfur-carrier protein]-C-terminal-Gly-aminoethanethioate + 2-iminoacetate + 1-deoxy-D-xylulose 5-phosphate = [ThiS sulfur-carrier protein]-C-terminal Gly-Gly + 2-[(2R,5Z)-2-carboxy-4-methylthiazol-5(2H)-ylidene]ethyl phosphate + 2 H2O + H(+). It functions in the pathway cofactor biosynthesis; thiamine diphosphate biosynthesis. Catalyzes the rearrangement of 1-deoxy-D-xylulose 5-phosphate (DXP) to produce the thiazole phosphate moiety of thiamine. Sulfur is provided by the thiocarboxylate moiety of the carrier protein ThiS. In vitro, sulfur can be provided by H(2)S. This Pseudomonas fluorescens (strain SBW25) protein is Thiazole synthase.